The following is a 157-amino-acid chain: Crossover junction endodeoxyribonuclease RuvC (157 aa).

Active-site residues include aspartate 7, glutamate 67, and aspartate 140. Mg(2+) contacts are provided by aspartate 7, glutamate 67, and aspartate 140.

The protein belongs to the RuvC family. In terms of assembly, homodimer which binds Holliday junction (HJ) DNA. The HJ becomes 2-fold symmetrical on binding to RuvC with unstacked arms; it has a different conformation from HJ DNA in complex with RuvA. In the full resolvosome a probable DNA-RuvA(4)-RuvB(12)-RuvC(2) complex forms which resolves the HJ. Mg(2+) serves as cofactor.

It is found in the cytoplasm. It carries out the reaction Endonucleolytic cleavage at a junction such as a reciprocal single-stranded crossover between two homologous DNA duplexes (Holliday junction).. Its function is as follows. The RuvA-RuvB-RuvC complex processes Holliday junction (HJ) DNA during genetic recombination and DNA repair. Endonuclease that resolves HJ intermediates. Cleaves cruciform DNA by making single-stranded nicks across the HJ at symmetrical positions within the homologous arms, yielding a 5'-phosphate and a 3'-hydroxyl group; requires a central core of homology in the junction. The consensus cleavage sequence is 5'-(A/T)TT(C/G)-3'. Cleavage occurs on the 3'-side of the TT dinucleotide at the point of strand exchange. HJ branch migration catalyzed by RuvA-RuvB allows RuvC to scan DNA until it finds its consensus sequence, where it cleaves and resolves the cruciform DNA. The polypeptide is Crossover junction endodeoxyribonuclease RuvC (Rickettsia prowazekii (strain Madrid E)).